The chain runs to 377 residues: UPF0754 membrane protein lmo2224 (377 aa).

2 helical membrane passes run 1–21 and 357–377; these read MSVL…GAMT and YLGG…AMWI.

The protein belongs to the UPF0754 family.

Its subcellular location is the cell membrane. The polypeptide is UPF0754 membrane protein lmo2224 (Listeria monocytogenes serovar 1/2a (strain ATCC BAA-679 / EGD-e)).